The primary structure comprises 868 residues: Monofunctional pimaradiene synthase (868 aa).

The Mg(2+) site is built by Asp-620, Asp-624, Asn-764, Thr-768, and Glu-772.

This sequence belongs to the terpene synthase family. Tpsd subfamily. It depends on Mg(2+) as a cofactor.

The catalysed reaction is (+)-copalyl diphosphate = (-)-pimara-8(14),15-diene + diphosphate. It functions in the pathway terpene metabolism; oleoresin biosynthesis. Its function is as follows. Involved in defensive oleoresin formation in conifers in response to insect attack or other injury. Involved in diterpene (C20) olefins biosynthesis. Monofunctional enzyme lacking the DXDD motif in the class II active site relevant for the cyclization of geranylgeranyl diphosphate (GGPP). Requires (+)-copalyl diphosphate ((+)-CPP) as substrate, but no activity with GGPP or ent-CPP. Pimaradiene is the major products of the enzyme. This chain is Monofunctional pimaradiene synthase, found in Pinus contorta (Shore pine).